The chain runs to 247 residues: MSQSPEHRTDGRRPEQLRPFSVTWNPMGFALSSLVVHTGRTAVLCSVCLEGKVPRWRKGEGLGWLSAEYRLLPGSTPQRQSRELMKLSGRTQEIQRLIGRSLRAVIDMERLGERTLLIDCDVIQADAGTRTASITGAWLALDQACRSLVEQGVLEQSPLVDQVAAVSVGLVDGQALLDLDYSEDSRAEVDLNVVQAGDGRLLEIQGTAEGAPFSRSQLNELLDLAEPGLSSLMQAQRQAFTEHSSVT.

Phosphate contacts are provided by residues Arg-90 and 128-130 (GTR).

This sequence belongs to the RNase PH family. In terms of assembly, homohexameric ring arranged as a trimer of dimers.

It carries out the reaction tRNA(n+1) + phosphate = tRNA(n) + a ribonucleoside 5'-diphosphate. In terms of biological role, phosphorolytic 3'-5' exoribonuclease that plays an important role in tRNA 3'-end maturation. Removes nucleotide residues following the 3'-CCA terminus of tRNAs; can also add nucleotides to the ends of RNA molecules by using nucleoside diphosphates as substrates, but this may not be physiologically important. Probably plays a role in initiation of 16S rRNA degradation (leading to ribosome degradation) during starvation. The chain is Ribonuclease PH from Synechococcus sp. (strain CC9605).